Here is a 331-residue protein sequence, read N- to C-terminus: Cathepsin S (331 aa).

Positions 1–16 are cleaved as a signal peptide; the sequence is MKWLVGLLPLCSYAVA. Positions 17-114 are cleaved as a propeptide — activation peptide; that stretch reads QVHKDPTLDH…VTYRSNSNQK (98 aa). An N-linked (GlcNAc...) asparagine glycan is attached at Asn104. 4 cysteine pairs are disulfide-bonded: Cys126–Cys224, Cys136–Cys180, Cys170–Cys213, and Cys272–Cys320. Residue Cys139 is part of the active site. Residues His278 and Asn298 contribute to the active site.

The protein belongs to the peptidase C1 family.

It localises to the lysosome. The protein localises to the secreted. It is found in the cytoplasmic vesicle. The protein resides in the phagosome. It catalyses the reaction Similar to cathepsin L, but with much less activity on Z-Phe-Arg-|-NHMec, and more activity on the Z-Val-Val-Arg-|-Xaa compound.. Functionally, thiol protease. Key protease responsible for the removal of the invariant chain from MHC class II molecules and MHC class II antigen presentation. The bond-specificity of this proteinase is in part similar to the specificities of cathepsin L. In Canis lupus familiaris (Dog), this protein is Cathepsin S (CTSS).